The sequence spans 645 residues: Developmental regulatory protein wetA (645 aa).

Disordered stretches follow at residues 158–187 (SLHS…RKPK), 201–249 (TNLR…VSPP), 284–376 (YYGQ…QMHW), 461–578 (AQTF…DGAS), and 596–618 (GVAP…DRRR). Residues 240–249 (TQGNLPVSPP) are compositionally biased toward polar residues. Composition is skewed to basic residues over residues 315–326 (QHHHHPHHHHQQ) and 351–361 (QHQHQHHHQQQ). The segment covering 362-373 (QHHQQQQQQQHQ) has biased composition (low complexity). Polar residues predominate over residues 509–518 (GPSSSPTPAD). A compositionally biased stretch (low complexity) spans 528 to 546 (SSGASVSSLRSSSGRLPAS). Positions 562–572 (ISGSNSATSLG) are enriched in polar residues.

Belongs to the wetA family.

BrlA, abaA and wetA are pivotal regulators of conidiophore development and conidium maturation. They act individually and together to regulate their own expression and that of numerous other sporulation-specific genes. BrlA, abaA and wetA act together to positively regulate the expression of the Pks1 gene cluster that mediates the biosynthesis of an anthraquinone derivative pigment that contributes to conidial pigmentation that provides protection from UV radiation, heat and cold stress. This Metarhizium robertsii (strain ARSEF 23 / ATCC MYA-3075) (Metarhizium anisopliae (strain ARSEF 23)) protein is Developmental regulatory protein wetA.